The sequence spans 185 residues: piRNA-mediated silencing protein C19orf84 homolog (185 aa).

Disordered stretches follow at residues 1–38 (MDELEDGALSNGDNLSLPSAGTESWPTSATPGLPPSLL) and 93–185 (HIWP…EADY). Residues 11–25 (NGDNLSLPSAGTESW) show a composition bias toward polar residues. The span at 26–38 (PTSATPGLPPSLL) shows a compositional bias: low complexity. Positions 118-130 (RPSRGWGRGRGRG) are enriched in basic residues. Residues 139-150 (GPERAEERERNM) are compositionally biased toward basic and acidic residues.

As to quaternary structure, interacts with SPOCD1.

It is found in the nucleus. Its subcellular location is the nucleoplasm. Protein adapter involved in piRNA-directed transposon methylation by connecting PIWIL4-piRNA and DNA methylation machineries. The PIWIL4-piRNA pathway plays a central role during spermatogenesis by directing transposon DNA methylation and silencing, thereby preventing their mobilization, which is essential for the germline integrity. The protein is piRNA-mediated silencing protein C19orf84 homolog of Mus musculus (Mouse).